Here is a 350-residue protein sequence, read N- to C-terminus: MLISQRPTLSEETVAENRSRFVIEPLEPGFGYTLGNSLRRTLLSSIPGAAVTSIRIDGVLHEFTTVPGVKEDVTDIILNLKGLVVSSDDDEPVTMYLRKQGPGVVTAGDIVPPAGVTVHNPDMHIATLNDKGKLEVELVVERGRGYVPAVQNKASGAEIGRIPVDSIYSPVLKVTYKVEATRVEQRTDFDKLIIDVETKNSISPRDALASAGGTLVELFGLARELNADSEHIEIGPSPAEADHIASFALPIDDLDLTVRSYNCLKREGVHTVGELVARTESDLLDIRNFGQKSIDEVKIKLHQLGLSLKDSPATFDPSEVAGYDAATGTWTSDAGYDLDDNQDYAETEQL.

The tract at residues 1 to 226 (MLISQRPTLS…ELFGLARELN (226 aa)) is alpha N-terminal domain (alpha-NTD). The interval 241–350 (ADHIASFALP…NQDYAETEQL (110 aa)) is alpha C-terminal domain (alpha-CTD). Residues 328-350 (GTWTSDAGYDLDDNQDYAETEQL) form a disordered region. The span at 336–350 (YDLDDNQDYAETEQL) shows a compositional bias: acidic residues.

The protein belongs to the RNA polymerase alpha chain family. As to quaternary structure, homodimer. The RNAP catalytic core consists of 2 alpha, 1 beta, 1 beta' and 1 omega subunit. When a sigma factor is associated with the core the holoenzyme is formed, which can initiate transcription.

The enzyme catalyses RNA(n) + a ribonucleoside 5'-triphosphate = RNA(n+1) + diphosphate. Functionally, DNA-dependent RNA polymerase catalyzes the transcription of DNA into RNA using the four ribonucleoside triphosphates as substrates. The polypeptide is DNA-directed RNA polymerase subunit alpha (Mycolicibacterium smegmatis (strain ATCC 700084 / mc(2)155) (Mycobacterium smegmatis)).